A 185-amino-acid chain; its full sequence is Ribosome-recycling factor (185 aa).

The protein belongs to the RRF family.

It localises to the cytoplasm. Functionally, responsible for the release of ribosomes from messenger RNA at the termination of protein biosynthesis. May increase the efficiency of translation by recycling ribosomes from one round of translation to another. This is Ribosome-recycling factor from Heliobacterium modesticaldum (strain ATCC 51547 / Ice1).